The primary structure comprises 180 residues: dCTP deaminase, dUMP-forming (180 aa).

Residues 100-105, Asp117, 125-127, Gln146, Tyr160, and Gln167 contribute to the dCTP site; these read RSSLGR and TLE. The Proton donor/acceptor role is filled by Glu127.

It belongs to the dCTP deaminase family. Homotrimer.

It catalyses the reaction dCTP + 2 H2O = dUMP + NH4(+) + diphosphate. It participates in pyrimidine metabolism; dUMP biosynthesis; dUMP from dCTP: step 1/1. Bifunctional enzyme that catalyzes both the deamination of dCTP to dUTP and the hydrolysis of dUTP to dUMP without releasing the toxic dUTP intermediate. The sequence is that of dCTP deaminase, dUMP-forming from Persephonella marina (strain DSM 14350 / EX-H1).